The following is a 695-amino-acid chain: Elongation factor G (695 aa).

Positions 12–286 (DKLRNIGIMA…AVIDYLPSPL (275 aa)) constitute a tr-type G domain. GTP contacts are provided by residues 21 to 28 (AHIDAGKT), 85 to 89 (DTPGH), and 139 to 142 (NKMD).

The protein belongs to the TRAFAC class translation factor GTPase superfamily. Classic translation factor GTPase family. EF-G/EF-2 subfamily.

The protein localises to the cytoplasm. Functionally, catalyzes the GTP-dependent ribosomal translocation step during translation elongation. During this step, the ribosome changes from the pre-translocational (PRE) to the post-translocational (POST) state as the newly formed A-site-bound peptidyl-tRNA and P-site-bound deacylated tRNA move to the P and E sites, respectively. Catalyzes the coordinated movement of the two tRNA molecules, the mRNA and conformational changes in the ribosome. The chain is Elongation factor G from Thermotoga petrophila (strain ATCC BAA-488 / DSM 13995 / JCM 10881 / RKU-1).